The chain runs to 371 residues: Beta-1,3-galactosyltransferase 4 (371 aa).

The Cytoplasmic segment spans residues 1 to 4 (MPLS). Residues 5–25 (LFRRLLLAVLLLVIIWTLFGP) form a helical; Signal-anchor for type II membrane protein membrane-spanning segment. Over 26-371 (SGLGEELLSL…RCRFIAWLNS (346 aa)) the chain is Lumenal. An N-linked (GlcNAc...) asparagine glycan is attached at Asn-143. The tract at residues 187-208 (GGPSEQWQKGKEPQEETTAVHK) is disordered. A compositionally biased stretch (basic and acidic residues) spans 194–207 (QKGKEPQEETTAVH).

It belongs to the glycosyltransferase 31 family. As to expression, highly expressed in thymus, spleen, kidney and testis and, to a lesser extent, in brain and liver.

It localises to the golgi apparatus membrane. The catalysed reaction is a ganglioside GM2 (d18:1(4E)) + UDP-alpha-D-galactose = a ganglioside GM1 (d18:1(4E)) + UDP + H(+). The enzyme catalyses a ganglioside GM2 + UDP-alpha-D-galactose = a ganglioside GM1 + UDP + H(+). It carries out the reaction a ganglioside GD2 (d18:1(4E)) + UDP-alpha-D-galactose = a ganglioside GD1b (d18:1(4E)) + UDP + H(+). It catalyses the reaction a ganglioside GA2 (d18:1(4E)) + UDP-alpha-D-galactose = a ganglioside GA1 (d18:1(4E)) + UDP + H(+). It participates in protein modification; protein glycosylation. Its function is as follows. Involved in GM1/GD1B/GA1 ganglioside biosynthesis. The protein is Beta-1,3-galactosyltransferase 4 (B3galt4) of Rattus norvegicus (Rat).